The sequence spans 453 residues: Plasticin (453 aa).

Positions 1 to 51 (MSHSTFSHLFSPHFGAPVYSPVSSRIGGRYVSSSVPTRSVDFRSRSSAPAP) are head. Residues 71 to 112 (FATRSNEKRELQELNDRFASFIEKVRHLEQQNSKLILELGQY) are coil 1A. The IF rod domain maps to 77–390 (EKRELQELND…KLLEGEENRI (314 aa)). A linker 1 region spans residues 113–126 (KDQHQGSTGRINEL). Positions 127–222 (CQQEMRELRR…KMHDEEIQDV (96 aa)) are coil 1B. A linker 12 region spans residues 223 to 245 (QVSVQSQQMKMEVMETSSRPDLT). The segment at 246–391 (GALRDIRAQY…LLEGEENRIV (146 aa)) is coil 2. The tail stretch occupies residues 392–453 (VPIMKMPSMS…KKDSHGQGKD (62 aa)). Positions 421–453 (IKTVETRDGEVVKESTKEKGRDEKKDSHGQGKD) are disordered. Basic and acidic residues predominate over residues 424–453 (VETRDGEVVKESTKEKGRDEKKDSHGQGKD).

Belongs to the intermediate filament family. As to expression, optic nerve.

Type III neurofilament. This chain is Plasticin, found in Carassius auratus (Goldfish).